Reading from the N-terminus, the 92-residue chain is Small ribosomal subunit protein uS19 (92 aa).

Belongs to the universal ribosomal protein uS19 family.

Its function is as follows. Protein S19 forms a complex with S13 that binds strongly to the 16S ribosomal RNA. The protein is Small ribosomal subunit protein uS19 of Agrobacterium fabrum (strain C58 / ATCC 33970) (Agrobacterium tumefaciens (strain C58)).